Consider the following 346-residue polypeptide: D-alanine--D-alanine ligase (346 aa).

The region spanning 133 to 326 (KFLAQKAGVK…LANSLPKERE (194 aa)) is the ATP-grasp domain. 159–209 (YPIILKPARLGSSIGVSVVHDDSELAYAKDVAFEFDKDVLVEPFIKGVKEY) is an ATP binding site. Mg(2+) is bound by residues D282, E294, and N296.

This sequence belongs to the D-alanine--D-alanine ligase family. Requires Mg(2+) as cofactor. Mn(2+) is required as a cofactor.

It localises to the cytoplasm. It carries out the reaction 2 D-alanine + ATP = D-alanyl-D-alanine + ADP + phosphate + H(+). It functions in the pathway cell wall biogenesis; peptidoglycan biosynthesis. Cell wall formation. This Campylobacter concisus (strain 13826) protein is D-alanine--D-alanine ligase.